Consider the following 603-residue polypeptide: ADP-ribosylation factor-binding protein GGA2 (603 aa).

The disordered stretch occupies residues 1 to 22 (MAATAVAAGTGSPAGTESAEGG). Over residues 13–22 (PAGTESAEGG) the composition is skewed to low complexity. In terms of domain architecture, VHS spans 36–166 (ATDPSMAEQD…MLKKQGIIKQ (131 aa)). The GAT domain occupies 190 to 317 (DEEKSKLLTR…GVRLYKQVVE (128 aa)). The tract at residues 318-473 (GRVSAGNAVP…VFVPLESVKP (156 aa)) is unstructured hinge. Residues 474-595 (SSLPPIVVYD…SEVGEVKDFP (122 aa)) enclose the GAE domain.

It belongs to the GGA protein family. Monomer. Interacts with NECAP1, TSG101, UBC and AFTPH/aftiphilin. Interacts with CNST. Interacts with GGA1 and GGA3. Binds to clathrin and activated ARFs, such as ARF1, ARF5 and ARF6. Binds RABEP1 and RABGEF1. Interacts with the type-I membrane proteins LRP3, M6PR/CD-MPR, IGF2R/CI-MPR and BACE1. Interacts (via N-terminal VHS domain) with SORL1/sorLA and SORT1 (via C-terminal cytosolic domain). Binds the accessory proteins CCDC91, P200, SYNRG, EPN4 and NECAP2. Interacts with ADRA2B. Interacts (via VHS domain) with PIK4B; the interaction is important for PIK4B location at the Golgi apparatus membrane. Ubiquitinated.

It localises to the golgi apparatus. It is found in the trans-Golgi network membrane. Its subcellular location is the endosome membrane. The protein localises to the early endosome membrane. Plays a role in protein sorting and trafficking between the trans-Golgi network (TGN) and endosomes. Mediates the ARF-dependent recruitment of clathrin to the TGN and binds ubiquitinated proteins and membrane cargo molecules with a cytosolic acidic cluster-dileucine (DXXLL) motif. Mediates export of the GPCR receptor ADRA2B to the cell surface. Regulates retrograde transport of phosphorylated form of BACE1 from endosomes to the trans-Golgi network. The chain is ADP-ribosylation factor-binding protein GGA2 (Gga2) from Mus musculus (Mouse).